The primary structure comprises 292 residues: DSC E3 ubiquitin ligase complex subunit 3 (292 aa).

Topologically, residues 1-243 are extracellular; it reads MSAEPLLPTH…PIANIKHNKD (243 aa). N-linked (GlcNAc...) asparagine glycosylation is found at Asn11, Asn41, Asn77, Asn99, and Asn145. A helical membrane pass occupies residues 244 to 264; that stretch reads LLLGICVGFFFGVFGILLMKF. Residues 265–273 lie on the Cytoplasmic side of the membrane; the sequence is DGLFNRRQK. The chain crosses the membrane as a helical span at residues 274–291; sequence MAIFAGVIVNVMFCLVRG. A topological domain (extracellular) is located at residue Phe292.

Belongs to the dsc3 family. As to quaternary structure, component of the DSC E3 ligase complexes composed of at least TUL1, DSC2, DSC3, UBX3, CDC48 as well as VLD1 for the vacuole-localized complex or GLD1 for the Golgi/endosome-localized complex.

It is found in the endoplasmic reticulum membrane. Functionally, component of the DSC E3 ubiquitin ligase complexes that tag proteins present in Golgi, endosome and vacuole membranes and function in protein homeostasis under non-stress conditions and support a role in protein quality control. Involved in endocytic protein trafficking. The protein is DSC E3 ubiquitin ligase complex subunit 3 of Saccharomyces cerevisiae (strain ATCC 204508 / S288c) (Baker's yeast).